The chain runs to 161 residues: MFSFSINTGSKKTLYSDLLTTLKELLSEEGDPIANMANTAALIWTYMPDLNWVGFYRAIRSYLILGPFQGKVACVKIPYGRGVCGTAAATGRIQCVRDVHTYPNHISCDPSAASELVIPIRGRQNQILAVIDLESPTMGRFDAEDVEGCSRLMEVLGRFLG.

It belongs to the free Met sulfoxide reductase family.

In Zymomonas mobilis subsp. mobilis (strain ATCC 31821 / ZM4 / CP4), this protein is Protein ZMO0507.